Consider the following 190-residue polypeptide: Peptidyl-prolyl cis-trans isomerase A (190 aa).

A signal peptide spans 1–24 (MFKSTLAAMAAVFALSALSPAAMA). The PPIase cyclophilin-type domain maps to 27–188 (GDPHVLLTTS…KPVVILSAKV (162 aa)).

This sequence belongs to the cyclophilin-type PPIase family.

Its subcellular location is the periplasm. The enzyme catalyses [protein]-peptidylproline (omega=180) = [protein]-peptidylproline (omega=0). Functionally, PPIases accelerate the folding of proteins. It catalyzes the cis-trans isomerization of proline imidic peptide bonds in oligopeptides. In Escherichia coli O157:H7, this protein is Peptidyl-prolyl cis-trans isomerase A (ppiA).